A 201-amino-acid polypeptide reads, in one-letter code: Large ribosomal subunit protein uL4 (201 aa).

Residues 45 to 72 (AQKTRAEVTGSGKKPWRQKGTGRARAGS) are disordered.

It belongs to the universal ribosomal protein uL4 family. As to quaternary structure, part of the 50S ribosomal subunit.

Its function is as follows. One of the primary rRNA binding proteins, this protein initially binds near the 5'-end of the 23S rRNA. It is important during the early stages of 50S assembly. It makes multiple contacts with different domains of the 23S rRNA in the assembled 50S subunit and ribosome. Forms part of the polypeptide exit tunnel. The polypeptide is Large ribosomal subunit protein uL4 (Shewanella frigidimarina (strain NCIMB 400)).